The chain runs to 142 residues: Transcriptional regulator MraZ (142 aa).

SpoVT-AbrB domains are found at residues 5–47 (EFQH…PQHE) and 76–119 (ATEC…SKEE).

This sequence belongs to the MraZ family. As to quaternary structure, forms oligomers.

Its subcellular location is the cytoplasm. The protein localises to the nucleoid. The protein is Transcriptional regulator MraZ of Desulforamulus reducens (strain ATCC BAA-1160 / DSM 100696 / MI-1) (Desulfotomaculum reducens).